The sequence spans 449 residues: Glucose-6-phosphate isomerase (449 aa).

Glu-291 serves as the catalytic Proton donor. Active-site residues include His-312 and Lys-426.

The protein belongs to the GPI family.

It is found in the cytoplasm. The catalysed reaction is alpha-D-glucose 6-phosphate = beta-D-fructose 6-phosphate. Its pathway is carbohydrate biosynthesis; gluconeogenesis. It functions in the pathway carbohydrate degradation; glycolysis; D-glyceraldehyde 3-phosphate and glycerone phosphate from D-glucose: step 2/4. Functionally, catalyzes the reversible isomerization of glucose-6-phosphate to fructose-6-phosphate. The chain is Glucose-6-phosphate isomerase from Streptococcus pyogenes serotype M5 (strain Manfredo).